A 141-amino-acid polypeptide reads, in one-letter code: Large ribosomal subunit protein uL11 (141 aa).

Belongs to the universal ribosomal protein uL11 family. In terms of assembly, part of the ribosomal stalk of the 50S ribosomal subunit. Interacts with L10 and the large rRNA to form the base of the stalk. L10 forms an elongated spine to which L12 dimers bind in a sequential fashion forming a multimeric L10(L12)X complex. In terms of processing, one or more lysine residues are methylated.

In terms of biological role, forms part of the ribosomal stalk which helps the ribosome interact with GTP-bound translation factors. The chain is Large ribosomal subunit protein uL11 from Carboxydothermus hydrogenoformans (strain ATCC BAA-161 / DSM 6008 / Z-2901).